The chain runs to 569 residues: Urease subunit alpha (569 aa).

The Urease domain maps to 131–569 (GGFDSHIHFI…LPMAQRYFLF (439 aa)). Ni(2+) is bound by residues H136, H138, and K219. Residue K219 is modified to N6-carboxylysine. H221 lines the substrate pocket. Residues H248 and H274 each contribute to the Ni(2+) site. H322 serves as the catalytic Proton donor. D362 is a Ni(2+) binding site.

It belongs to the metallo-dependent hydrolases superfamily. Urease alpha subunit family. In terms of assembly, heterotrimer of UreA (gamma), UreB (beta) and UreC (alpha) subunits. Three heterotrimers associate to form the active enzyme. It depends on Ni cation as a cofactor. Carboxylation allows a single lysine to coordinate two nickel ions.

Its subcellular location is the cytoplasm. It catalyses the reaction urea + 2 H2O + H(+) = hydrogencarbonate + 2 NH4(+). It functions in the pathway nitrogen metabolism; urea degradation; CO(2) and NH(3) from urea (urease route): step 1/1. The chain is Urease subunit alpha from Ruegeria pomeroyi (strain ATCC 700808 / DSM 15171 / DSS-3) (Silicibacter pomeroyi).